Reading from the N-terminus, the 457-residue chain is Exodeoxyribonuclease 7 large subunit (457 aa).

This sequence belongs to the XseA family. Heterooligomer composed of large and small subunits.

It is found in the cytoplasm. It carries out the reaction Exonucleolytic cleavage in either 5'- to 3'- or 3'- to 5'-direction to yield nucleoside 5'-phosphates.. Functionally, bidirectionally degrades single-stranded DNA into large acid-insoluble oligonucleotides, which are then degraded further into small acid-soluble oligonucleotides. In Enterobacter sp. (strain 638), this protein is Exodeoxyribonuclease 7 large subunit.